Consider the following 264-residue polypeptide: MQQYLDLLAHVMEKGSDRGDRTGTGTRSVFGYQMRFDLGEGFPVLTTKKLHLRSIVHELLWFLKGETNIRYLKENGVSIWDEWADENGDLGPVYGAQWRSWPAPDGGHIDQIANLVKGIVNNPNSRRHIVSAWNPAEVDQMALPPCHCLFQFYVADGKLSCQLYQRSADVFLGVPFNIASYALLTMMVAQVTGLKGGDFVHTLGDAHLYHNHFDQAKLQLTRRPKPLPFMRINPEVKDIFGFTFDDFELIGYEADASIKAPIAV.

Residue Arg21 participates in dUMP binding. His51 serves as a coordination point for (6R)-5,10-methylene-5,6,7,8-tetrahydrofolate. 126–127 (RR) contributes to the dUMP binding site. Residue Cys146 is the Nucleophile of the active site. Residues 166–169 (RSAD), Asn177, and 207–209 (HLY) each bind dUMP. Asp169 contacts (6R)-5,10-methylene-5,6,7,8-tetrahydrofolate. Residue Ala263 participates in (6R)-5,10-methylene-5,6,7,8-tetrahydrofolate binding.

The protein belongs to the thymidylate synthase family. Bacterial-type ThyA subfamily. In terms of assembly, homodimer.

It localises to the cytoplasm. It catalyses the reaction dUMP + (6R)-5,10-methylene-5,6,7,8-tetrahydrofolate = 7,8-dihydrofolate + dTMP. It functions in the pathway pyrimidine metabolism; dTTP biosynthesis. Its function is as follows. Catalyzes the reductive methylation of 2'-deoxyuridine-5'-monophosphate (dUMP) to 2'-deoxythymidine-5'-monophosphate (dTMP) while utilizing 5,10-methylenetetrahydrofolate (mTHF) as the methyl donor and reductant in the reaction, yielding dihydrofolate (DHF) as a by-product. This enzymatic reaction provides an intracellular de novo source of dTMP, an essential precursor for DNA biosynthesis. This chain is Thymidylate synthase, found in Rhizobium etli (strain ATCC 51251 / DSM 11541 / JCM 21823 / NBRC 15573 / CFN 42).